The sequence spans 717 residues: MDKINPDWARDVPCRNVIIYGFCKKKTEGCPFKHDDDDIATPTSTPKVADTVPAPSGVIQQPSKISVSSLPSLNSQPSSTAPTSAPNATAHTGSKSQVPKFNAKASASFTPMSKAADGTQETQAPYLESPVAGSPGPILKAGTPVSFMQPNIYSTTPVPSPASMAMPNVVMPPNDMGSPDLGLQQQSHMVNLDGSIQQNYQERPNVLMRDSSMPLTMGTSGSRPMLDQQIHSISGLSNTSGPQPPGLLQSMNGASMDMGLPMNLRYPTIYPPTHSILQYHLYAPDPPPQLEIALKENERTPRMLFIPNDLREELVKRNLASLQLFPSGGNLPHIVKDYFGLVPLDFHQRSSVKDRYKKHKNSLYKVFSNVDGRIYLLRRIHDVNISDPTIISKTFQKWSKIDSSNVVALKDLFLTTAFGDSSLGIVYDYYPNATSLYEAHFVNYPTVEVTEDLLWSYAVQILNGLREIHNTNGVNIGDLDCDKIILTGKGRIKISAGAEYDIMNMCCPEDNEDDDNEEKLRKRNFVDLGEILFKLASKMCNCHGKDVANLAQVSEKLKNLIKSLAFEQLHDYVNVATIIEKYIGLDVVFKVMEAQQTYSEYAENVLSRELENGRLFRLICKLNFIFGRVENRLDINWSEPGDKFVIVLFYDYVFHQIDPNTGKPVTDLTHVLRCLNKLDAGVEENILLVTPDELNTAVVSYKKVKELVDKTFRAMTL.

The C3H1-type zinc-finger motif lies at 8–37 (WARDVPCRNVIIYGFCKKKTEGCPFKHDDD). A disordered region spans residues 37-100 (DDIATPTSTP…HTGSKSQVPK (64 aa)). The span at 62–90 (PSKISVSSLPSLNSQPSSTAPTSAPNATA) shows a compositional bias: low complexity. The segment covering 91–100 (HTGSKSQVPK) has biased composition (polar residues). The pseudokinase domain stretch occupies residues 323–585 (QLFPSGGNLP…ATIIEKYIGL (263 aa)). ATP is bound by residues arginine 378, 428-435 (DYYPNATS), and 482-483 (DK). Residues 586-624 (DVVFKVMEAQQTYSEYAENVLSRELENGRLFRLICKLNF) adopt a coiled-coil conformation. The tract at residues 625 to 717 (IFGRVENRLD…VDKTFRAMTL (93 aa)) is knob domain.

Belongs to the protein kinase superfamily. PAN3 family. As to quaternary structure, homodimer. Forms a heterotrimer with a catalytic subunit PAN2 to form the poly(A)-nuclease (PAN) deadenylation complex. Interacts (via PAM-2 motif) with poly(A)-binding protein PAB1 (via PABC domain), conferring substrate specificity of the enzyme complex.

The protein resides in the cytoplasm. Regulatory subunit of the poly(A)-nuclease (PAN) deadenylation complex, one of two cytoplasmic mRNA deadenylases involved in mRNA turnover. PAN specifically shortens poly(A) tails of RNA and the activity is stimulated by poly(A)-binding protein PAB1. PAN deadenylation is followed by rapid degradation of the shortened mRNA tails by the CCR4-NOT complex. Deadenylated mRNAs are then degraded by two alternative mechanisms, namely exosome-mediated 3'-5' exonucleolytic degradation, or deadenylation-dependent mRNA decaping and subsequent 5'-3' exonucleolytic degradation by XRN1. May also be involved in post-transcriptional maturation of mRNA poly(A) tails. PAN3 acts as a positive regulator for PAN activity, recruiting the catalytic subunit PAN2 to mRNA via its interaction with RNA and with PAB1. The sequence is that of PAN2-PAN3 deadenylation complex subunit PAN3 from Candida glabrata (strain ATCC 2001 / BCRC 20586 / JCM 3761 / NBRC 0622 / NRRL Y-65 / CBS 138) (Yeast).